The chain runs to 314 residues: 4-hydroxy-3-methylbut-2-enyl diphosphate reductase (314 aa).

Cys12 serves as a coordination point for [4Fe-4S] cluster. (2E)-4-hydroxy-3-methylbut-2-enyl diphosphate contacts are provided by His41 and His74. The dimethylallyl diphosphate site is built by His41 and His74. Isopentenyl diphosphate-binding residues include His41 and His74. Cys96 contacts [4Fe-4S] cluster. (2E)-4-hydroxy-3-methylbut-2-enyl diphosphate is bound at residue His124. A dimethylallyl diphosphate-binding site is contributed by His124. His124 is an isopentenyl diphosphate binding site. Glu126 serves as the catalytic Proton donor. Thr167 is a (2E)-4-hydroxy-3-methylbut-2-enyl diphosphate binding site. Cys197 contributes to the [4Fe-4S] cluster binding site. (2E)-4-hydroxy-3-methylbut-2-enyl diphosphate is bound by residues Ser225, Ser226, Asn227, and Ser269. Dimethylallyl diphosphate is bound by residues Ser225, Ser226, Asn227, and Ser269. Isopentenyl diphosphate is bound by residues Ser225, Ser226, Asn227, and Ser269.

Belongs to the IspH family. It depends on [4Fe-4S] cluster as a cofactor.

It carries out the reaction isopentenyl diphosphate + 2 oxidized [2Fe-2S]-[ferredoxin] + H2O = (2E)-4-hydroxy-3-methylbut-2-enyl diphosphate + 2 reduced [2Fe-2S]-[ferredoxin] + 2 H(+). The enzyme catalyses dimethylallyl diphosphate + 2 oxidized [2Fe-2S]-[ferredoxin] + H2O = (2E)-4-hydroxy-3-methylbut-2-enyl diphosphate + 2 reduced [2Fe-2S]-[ferredoxin] + 2 H(+). Its pathway is isoprenoid biosynthesis; dimethylallyl diphosphate biosynthesis; dimethylallyl diphosphate from (2E)-4-hydroxy-3-methylbutenyl diphosphate: step 1/1. It functions in the pathway isoprenoid biosynthesis; isopentenyl diphosphate biosynthesis via DXP pathway; isopentenyl diphosphate from 1-deoxy-D-xylulose 5-phosphate: step 6/6. Its function is as follows. Catalyzes the conversion of 1-hydroxy-2-methyl-2-(E)-butenyl 4-diphosphate (HMBPP) into a mixture of isopentenyl diphosphate (IPP) and dimethylallyl diphosphate (DMAPP). Acts in the terminal step of the DOXP/MEP pathway for isoprenoid precursor biosynthesis. This Psychromonas ingrahamii (strain DSM 17664 / CCUG 51855 / 37) protein is 4-hydroxy-3-methylbut-2-enyl diphosphate reductase.